The sequence spans 228 residues: MKISFHGQSCIKIITGDTTILVDPFISGNEKCDLKAEEQMPDFIVLSHGHDDHVGDTVEIAKNSGATVICNADLASFLAVEDGLENIAPMHIGGKRQFSFGQVKLTQAFHGSQTVRDGRIVNLGFPTGIVFTIEDKNIYFAGDTGLFSDMKLIGELNPLDVAFLPIGDNFTMGPEDAAIAARFLQAKLVVPMHYNTFPLIAQDPHKFVASLDEGITGKVLEIGEGIEI.

This sequence belongs to the UPF0173 family.

In Listeria monocytogenes serotype 4b (strain CLIP80459), this protein is UPF0173 metal-dependent hydrolase Lm4b_01588.